Reading from the N-terminus, the 457-residue chain is uncharacterized protein (457 aa).

A run of 12 helical transmembrane segments spans residues 18-38 (VMTVAGATVGFGATWRFPYLV), 44-64 (GAYVLLFCIAMIVIGIPMILV), 101-121 (MGLLGAFGIMAYYMVLGGWVI), 158-178 (IIFYTLLFVIVNYIILAKGII), 188-208 (LMPLLFIFLIGMVIRNVTLPG), 228-248 (LFIFVLGQVFFALSLGFGVLI), 273-293 (IIAVLAGFMIFPSLFTFGIEP), 294-314 (NAGPTLVFQSLPIVFSHLWAG), 316-336 (FFAIIFFGLLLIAALTTSITI), 355-375 (AIVLTLSGIFLLGNIPAILGD), 396-416 (SGNILFMLTALGCAIFVGFVL), and 433-453 (IKIWFNYVKFVVPLIILVIFI).

It belongs to the sodium:neurotransmitter symporter (SNF) (TC 2.A.22) family.

The protein localises to the cell membrane. Functionally, putative sodium-dependent transporter. This is an uncharacterized protein from Haemophilus influenzae (strain ATCC 51907 / DSM 11121 / KW20 / Rd).